A 177-amino-acid chain; its full sequence is CDP-diacylglycerol--serine O-phosphatidyltransferase (177 aa).

5 consecutive transmembrane segments (helical) span residues 4-24 (IPCMITIGNFICGLLAIHSLL), 28-48 (IHSAVLFIFTGMFLDFFDGMA), 77-97 (MLAYSVALYTLPFIGILCALT), 116-136 (LPTFIGMPIPFAGMCLVILSF), and 140-160 (PILLAIGTCGLSYLMVSKIKF).

It belongs to the CDP-alcohol phosphatidyltransferase class-I family.

It is found in the cell membrane. The catalysed reaction is a CDP-1,2-diacyl-sn-glycerol + L-serine = a 1,2-diacyl-sn-glycero-3-phospho-L-serine + CMP + H(+). The sequence is that of CDP-diacylglycerol--serine O-phosphatidyltransferase (pssA) from Bacillus subtilis (strain 168).